The primary structure comprises 239 residues: ATP-dependent dethiobiotin synthetase BioD (239 aa).

Residue 15–20 (EIGKTF) participates in ATP binding. Residue T19 coordinates Mg(2+). The active site involves K40. ATP is bound by residues D57, 118-121 (EGVG), 178-179 (NH), and 211-213 (AHL). D57 and E118 together coordinate Mg(2+).

Belongs to the dethiobiotin synthetase family. In terms of assembly, homodimer. The cofactor is Mg(2+).

It localises to the cytoplasm. It catalyses the reaction (7R,8S)-7,8-diammoniononanoate + CO2 + ATP = (4R,5S)-dethiobiotin + ADP + phosphate + 3 H(+). It functions in the pathway cofactor biosynthesis; biotin biosynthesis; biotin from 7,8-diaminononanoate: step 1/2. In terms of biological role, catalyzes a mechanistically unusual reaction, the ATP-dependent insertion of CO2 between the N7 and N8 nitrogen atoms of 7,8-diaminopelargonic acid (DAPA, also called 7,8-diammoniononanoate) to form a ureido ring. The sequence is that of ATP-dependent dethiobiotin synthetase BioD from Burkholderia ambifaria (strain MC40-6).